A 437-amino-acid polypeptide reads, in one-letter code: Serine carboxypeptidase-like 7 (437 aa).

The first 25 residues, 1–25, serve as a signal peptide directing secretion; the sequence is MANDYVSTVLLLLSLLIFLSQRTDS. Disulfide bonds link Cys84/Cys327, Cys248/Cys262, and Cys286/Cys293. N-linked (GlcNAc...) asparagine glycosylation is present at Asn105. Residue Ser180 is part of the active site. Asn346 carries N-linked (GlcNAc...) asparagine glycosylation. Asp362 is an active-site residue. An N-linked (GlcNAc...) asparagine glycan is attached at Asn378. His415 is a catalytic residue.

It belongs to the peptidase S10 family. Ubiquitous.

It localises to the secreted. Functionally, probable carboxypeptidase. In Arabidopsis thaliana (Mouse-ear cress), this protein is Serine carboxypeptidase-like 7 (SCPL7).